A 352-amino-acid polypeptide reads, in one-letter code: C-C chemokine receptor type 5 (352 aa).

Residues 1–30 (MDYQVSSPIYDINYYTSEPCQKINVKQIAA) are Extracellular-facing. Tyrosine 3 carries the post-translational modification Sulfotyrosine. 2 O-linked (GalNAc...) serine glycosylation sites follow: serine 6 and serine 7. Residues tyrosine 10, tyrosine 14, and tyrosine 15 each carry the sulfotyrosine modification. 2 cysteine pairs are disulfide-bonded: cysteine 20-cysteine 269 and cysteine 101-cysteine 178. A helical transmembrane segment spans residues 31-58 (RLLPPLYSLVFIFGFVGNMLVILILINC). At 59–68 (KRLKSMTDIY) the chain is on the cytoplasmic side. The helical transmembrane segment at 69-89 (LLNLAISDLFFLLTVPFWAHY) threads the bilayer. The Extracellular segment spans residues 90 to 102 (AAAQWDFGNTMCQ). The chain crosses the membrane as a helical span at residues 103 to 124 (LLTGLYFIGFFSGIFFIILLTI). Residues 125 to 141 (DRYLAVVHAVFALKART) are Cytoplasmic-facing. The helical transmembrane segment at 142–166 (VTFGVVTSVITWVVAVFASLPGIIF) threads the bilayer. Topologically, residues 167–198 (TRSQKEGLHYTCSSHFPYSQYQFWKNFQTLKI) are extracellular. The chain crosses the membrane as a helical span at residues 199-218 (VILGLVLPLLVMVICYSGIL). The Cytoplasmic segment spans residues 219–235 (KTLLRCRNEKKRHRAVR). Residues 236–260 (LIFTIMIVYFLFWAPYNIVLLLNTF) traverse the membrane as a helical segment. The Extracellular portion of the chain corresponds to 261–277 (QEFFGLNNCSSSNRLDQ). Residues 278 to 301 (AMQVTETLGMTHCCINPIIYAFVG) form a helical membrane-spanning segment. Over 302-352 (EKFRNYLLVFFQKHIAKRFCKCCSIFQQEAPERASSVYTRSTGEQEISVGL) the chain is Cytoplasmic. Residues cysteine 321, cysteine 323, and cysteine 324 are each lipidated (S-palmitoyl cysteine). A phosphoserine; by BARK1 mark is found at serine 336, serine 337, serine 342, and serine 349.

It belongs to the G-protein coupled receptor 1 family. As to quaternary structure, interacts with PRAF2. Efficient ligand binding to CCL3/MIP-1alpha and CCL4/MIP-1beta requires sulfation, O-glycosylation and sialic acid modifications. Glycosylation on Ser-6 is required for efficient binding of CCL4. Interacts with GRK2. Interacts with ARRB1 and ARRB2. Interacts with CNIH4. Interacts with S100A4; this interaction stimulates T-lymphocyte chemotaxis. (Microbial infection) Interacts with HIV-1 surface protein gp120. In terms of assembly, (Microbial infection) May interact with human cytomegalovirus/HHV-5 protein UL78. In terms of processing, sulfated on at least 2 of the N-terminal tyrosines. Sulfation contributes to the efficiency of HIV-1 entry and is required for efficient binding of the chemokines, CCL3 and CCL4. Post-translationally, O-glycosylated, but not N-glycosylated. Ser-6 appears to be the major site even if Ser-7 may be also O-glycosylated. Also sialylated glycans present which contribute to chemokine binding. Thr-16 and Ser-17 may also be glycosylated and, if so, with small moieties such as a T-antigen. Palmitoylation in the C-terminal is important for cell surface expression, and to a lesser extent, for HIV entry. In terms of processing, phosphorylation on serine residues in the C-terminal is stimulated by binding CC chemokines especially by APO-RANTES. In terms of tissue distribution, highly expressed in spleen, thymus, in the myeloid cell line THP-1, in the promyeloblastic cell line KG-1a and on CD4+ and CD8+ T-cells. Medium levels in peripheral blood leukocytes and in small intestine. Low levels in ovary and lung.

It localises to the cell membrane. Its function is as follows. Receptor for a number of inflammatory CC-chemokines including CCL3/MIP-1-alpha, CCL4/MIP-1-beta and RANTES and subsequently transduces a signal by increasing the intracellular calcium ion level. May play a role in the control of granulocytic lineage proliferation or differentiation. Participates in T-lymphocyte migration to the infection site by acting as a chemotactic receptor. In terms of biological role, (Microbial infection) Acts as a coreceptor (CD4 being the primary receptor) of human immunodeficiency virus-1/HIV-1. The sequence is that of C-C chemokine receptor type 5 from Homo sapiens (Human).